The sequence spans 523 residues: MSQQVIIFDTTLRDGEQALQASLSAKEKLQIALALERMGVDVMEVGFPVSSPGDFESVQTIARQVKNSRVCALARCVEKDIDVAAESLKVAEAFRIHTFIATSPMHIATKLRSTLDEVIERAIYMVKRARNYTDDVEFSCEDAGRTPIADLARVVEAAINAGATTINIPDTVGYTMPFEFAGIISGLYERVPNIDKAIISVHTHDDLGLAVGNSLAAVHAGARQVEGAMNGIGERAGNCSLEEVIMAIKVRKDILNVHTAINHQEIWRTSQLVSQICNMPIPANKAIVGSGAFAHSSGIHQDGVLKNRENYEIMTPESIGLNQIQLNLTSRSGRAAVKHRMDEMGYKESEYNLDNLYDAFLKLADKKGQVFDYDLEALAFIGKQQEEPEHFRLDYFSVQSGSNDIATAAVKLACGEEVKAEAANGNGPVDAVYQAINRITDYNVELVKYSLTAKGHGKDALGQVDIVANYNGRRFHGVGLATDIVESSAKAMVHVLNNIWRAAEVEKELQRKAQHNENNKETV.

The 263-residue stretch at 5–267 folds into the Pyruvate carboxyltransferase domain; sequence VIIFDTTLRD…HTAINHQEIW (263 aa). Aspartate 14, histidine 202, histidine 204, and asparagine 238 together coordinate Mn(2+). The tract at residues 392-523 is regulatory domain; sequence RLDYFSVQSG…QHNENNKETV (132 aa).

Belongs to the alpha-IPM synthase/homocitrate synthase family. LeuA type 1 subfamily. As to quaternary structure, homodimer. Requires Mn(2+) as cofactor.

It is found in the cytoplasm. It catalyses the reaction 3-methyl-2-oxobutanoate + acetyl-CoA + H2O = (2S)-2-isopropylmalate + CoA + H(+). The protein operates within amino-acid biosynthesis; L-leucine biosynthesis; L-leucine from 3-methyl-2-oxobutanoate: step 1/4. Functionally, catalyzes the condensation of the acetyl group of acetyl-CoA with 3-methyl-2-oxobutanoate (2-ketoisovalerate) to form 3-carboxy-3-hydroxy-4-methylpentanoate (2-isopropylmalate). The sequence is that of 2-isopropylmalate synthase from Escherichia coli (strain SMS-3-5 / SECEC).